Here is a 1240-residue protein sequence, read N- to C-terminus: MATTTQRRLEPTSIRKFGTGLGQFDLPDLTALQTVSYAAFLQEDAASNARKDHGLESVLREIFPIASYDGNTTLEYLYYELGKPRYTIQECRQLRLTYGRPLRIWLRLNREEPIEEEVYLGDLPIMLGGGEFIINGAERVVVSQLHRSPGVDFVLEQDTTTDRKLPSCRVIPERGSWIEVNVTKKDALTVRIDQSGKFAATMLLRAMDPKYSTDADLLSAFYETGTIKVNGGKDATKIENKIAVDDVVYPSGHERAGEIIVEAGYKITTELSETICNAGVTSVEAMDLPKVPLIFNTLADDNTASHEEALLRIYQRLRPGNPPQLEKARTLFQEKFYDDNRYRLGKVGRFRLNRKLGLGVEETVMTLRPDDMIAAIRYLIDLFDADSGAEIDDIDHLGNRRLRTIDELASEELRKGFLKLRRTVQERMSVKDAQDMTPRSLINPKSVSAAIDFFFGRGELSQVVDQTNPLSQLAHERRLSALGPGGLNRKRAGFEVRDVHISHYGRICPIETPEGTNIGLISSLAIYAGVDDYGFLCTPFRKVIDGKISDETVWLRADEEGESYVAPADTEVKDGALVPGPNMIARFRSDFEIVMPEQVSFMDVAPAQMVGVSAGLIPFLEHDDANRALMGSNMQRQAVPLLVTEPPIVGTGMEREVAKNSAMVVRARRAGKVTYADATRIEIGSDHYPLKKYQGLNERTCQNQKPLITVGDKVEKGQIIADGAATQKGELALGRNVLVGFMSFDGFNYEDAIIISEELVRNDTYTSIHIEDFDVEIRETKLGREEFTRDIPNVSEKALRNLDDTGIVQTGTYVKPGDILVGKVSPKSKTELTPEEKLLHAIFGRAGEDVKNDSLEVPSGIEGIVIDTQKFSRRMSLGEDERKAFERELKQHETEGNEEIASTFESLIRDMEEASGVKLKDSTGTPLADGQDPKFVAERATSFRLELVLEQIEDEEKRKAAEKVHQTQWQNVEQAIDERDRKLNSMKRGDELRSGVLQMVKIYIATKRTISVGDKMAGRHGNKGVIAKILPIEDMPFLPDGTPIQIMLNPLGVPSRMNVGQILETHLGWAGAKLGFQALTPIFDGASESEINDCLAEAGLPAHGKIRLTDGRTGEPMEQETTVGYIYMLKLHHLVDDKVHARSTGPYSLITQQPLGGKARFGGQRFGEMEVWALEAYGAAYILQELLTVKSDDVEGRTKIYESMVKGENTLEAGTPASFDVLTNEIRGLALNMQLEKRPI.

This sequence belongs to the RNA polymerase beta chain family. As to quaternary structure, the RNAP catalytic core consists of 2 alpha, 1 beta, 1 beta' and 1 omega subunit. When a sigma factor is associated with the core the holoenzyme is formed, which can initiate transcription.

The enzyme catalyses RNA(n) + a ribonucleoside 5'-triphosphate = RNA(n+1) + diphosphate. DNA-dependent RNA polymerase catalyzes the transcription of DNA into RNA using the four ribonucleoside triphosphates as substrates. This Rhodopirellula baltica (strain DSM 10527 / NCIMB 13988 / SH1) protein is DNA-directed RNA polymerase subunit beta.